We begin with the raw amino-acid sequence, 731 residues long: Gelsolin (731 aa).

The actin-severing stretch occupies residues 2-125 (VVEHPEFLKA…YKKGGVASGF (124 aa)). The stretch at 25 to 107 (FDLVPVPPNL…VQGFESATFL (83 aa)) is one Gelsolin-like 1 repeat. The residue at position 35 (tyrosine 35) is a Phosphotyrosine. Positions 41, 42, 73, 85, 90, and 92 each coordinate Ca(2+). The interval 72 to 75 (DESG) is actin-actin interfilament contact point. 111-118 (KSGLKYKK) contacts a 1,2-diacyl-sn-glycero-3-phospho-(1D-myo-inositol-4,5-bisphosphate). Position 121 (valine 121) interacts with Ca(2+). 137-145 (RLLQVKGRR) lines the a 1,2-diacyl-sn-glycero-3-phospho-(1D-myo-inositol-4,5-bisphosphate) pocket. The Gelsolin-like 2 repeat unit spans residues 147-219 (VRATEVPVSW…FEEGAEPEAM (73 aa)). Ca(2+) contacts are provided by glycine 162 and aspartate 163. Cysteine 164 and cysteine 177 are oxidised to a cystine. The Ca(2+) site is built by glutamate 185, aspartate 235, glutamate 278, aspartate 279, and glutamate 303. A Gelsolin-like 3 repeat occupies 266 to 338 (DENPFAQGAL…LPEGGETPLF (73 aa)). 2 positions are modified to phosphotyrosine: tyrosine 358 and tyrosine 414. The segment at 383 to 731 (AAQHGMDDDG…LDRALAELAA (349 aa)) is actin-binding, Ca-sensitive. A Gelsolin-like 4 repeat occupies 404–485 (SNKVPVDPAT…VQGKEPAHLM (82 aa)). 7 residues coordinate Ca(2+): glycine 420, aspartate 421, glutamate 451, aspartate 463, glycine 468, proline 470, and threonine 500. Lysine 533 is subject to N6-acetyllysine. Residues 533–591 (KAGALNSNDAFVLKTPSAAYLWVGAGASEAEKTGAQELLRVLRAQPVQVAEGSEPDSFW) form a Gelsolin-like 5 repeat. Residues asparagine 540 and aspartate 541 each contribute to the Ca(2+) site. Tyrosine 552 bears the Phosphotyrosine mark. Glutamate 563 serves as a coordination point for Ca(2+). Residue tyrosine 600 is modified to Phosphotyrosine. The Gelsolin-like 6 repeat unit spans residues 630 to 705 (IEEVPGEFMQ…VKQGFEPPSF (76 aa)). Residues aspartate 645, aspartate 646, and glutamate 668 each contribute to the Ca(2+) site. Position 691 is a phosphothreonine (threonine 691).

It belongs to the villin/gelsolin family. In terms of assembly, binds to actin and to fibronectin. Identified in a complex composed of ACTA1, COBL, GSN and TMSB4X. Interacts with the inactive form of EIF2AK2/PKR. Interacts with FLII.

Its subcellular location is the cytoplasm. The protein localises to the cytoskeleton. Its function is as follows. Calcium-regulated, actin-modulating protein that binds to the plus (or barbed) ends of actin monomers or filaments, preventing monomer exchange (end-blocking or capping). It can promote the assembly of monomers into filaments (nucleation) as well as sever filaments already formed. Plays a role in ciliogenesis. The chain is Gelsolin (GSN) from Equus caballus (Horse).